The following is a 262-amino-acid chain: MNLFSLKAEKFLNLKTLSDLKLIKIFRWDSSEKKDPWYSTYVVSLKNCGPIVLDALIKIKNECDSTVSFRRSCREGICGSCAININGTNSLACLQKLNIKNNIIYVYPLPHIFVLKDLVVDLTNFYAQYRLIQPWLQSSLNIKSKKEIYQSKQDRLYLDGLYECILCACCSASCPSYWWNHDKYLGPAVLLQAYRWIVDSRDDNTLSRLLSLKDSYKLYRCHTIMNCTKTCPKHLNPGKVIASIKKRLLNLEVLGEKRDLNS.

Positions 21–110 (KLIKIFRWDS…NNIIYVYPLP (90 aa)) constitute a 2Fe-2S ferredoxin-type domain. [2Fe-2S] cluster-binding residues include cysteine 73, cysteine 78, cysteine 81, and cysteine 93. Residues 154–184 (DRLYLDGLYECILCACCSASCPSYWWNHDKY) form the 4Fe-4S ferredoxin-type domain. 3 residues coordinate [4Fe-4S] cluster: cysteine 164, cysteine 167, and cysteine 170. Cysteine 174 lines the [3Fe-4S] cluster pocket. Position 179 (tryptophan 179) interacts with a ubiquinone. Positions 221 and 227 each coordinate [3Fe-4S] cluster. Cysteine 231 lines the [4Fe-4S] cluster pocket.

This sequence belongs to the succinate dehydrogenase/fumarate reductase iron-sulfur protein family. In terms of assembly, component of complex II composed of four subunits: a flavoprotein (FP), an iron-sulfur protein (IP), and a cytochrome b composed of a large and a small subunit. Requires [2Fe-2S] cluster as cofactor. The cofactor is [3Fe-4S] cluster. [4Fe-4S] cluster serves as cofactor.

The protein resides in the mitochondrion inner membrane. The catalysed reaction is a quinone + succinate = fumarate + a quinol. It participates in carbohydrate metabolism; tricarboxylic acid cycle; fumarate from succinate (eukaryal route): step 1/1. In terms of biological role, iron-sulfur protein (IP) subunit of succinate dehydrogenase (SDH) that is involved in complex II of the mitochondrial electron transport chain and is responsible for transferring electrons from succinate to ubiquinone (coenzyme Q). In Cyanidium caldarium (Red alga), this protein is Succinate dehydrogenase [ubiquinone] iron-sulfur subunit (SDH2).